The primary structure comprises 436 residues: Autophagy-related protein 18 (436 aa).

WD repeat units lie at residues 192-232 (AHRS…KLYQ), 237-276 (SMPS…SSPD), and 374-414 (GNNG…GGEG). Positions 233–237 (FRRGS) match the L/FRRG motif motif. The interval 268–315 (LSHPTSSPDTSPSSPVGRDRSLSQSSSGYSPDRGDLTGDVGSSDFPAR) is disordered. Over residues 269–282 (SHPTSSPDTSPSSP) the composition is skewed to low complexity.

Belongs to the WD repeat PROPPIN family. In terms of assembly, component of the PI(3,5)P2 regulatory complex.

It localises to the preautophagosomal structure membrane. Its subcellular location is the vacuole membrane. The protein localises to the endosome membrane. The PI(3,5)P2 regulatory complex regulates both the synthesis and turnover of phosphatidylinositol 3,5-bisphosphate (PtdIns(3,5)P2). Necessary for proper vacuole morphology. Plays an important role in osmotically-induced vacuole fragmentation. Required for cytoplasm to vacuole transport (Cvt) vesicle formation, pexophagy and starvation-induced autophagy. Involved in correct atg9 trafficking to the pre-autophagosomal structure. Might also be involved in premeiotic DNA replication. The protein is Autophagy-related protein 18 (atg18) of Aspergillus fumigatus (strain ATCC MYA-4609 / CBS 101355 / FGSC A1100 / Af293) (Neosartorya fumigata).